We begin with the raw amino-acid sequence, 78 residues long: Large ribosomal subunit protein bL28 (78 aa).

The tract at residues 1-25 (MSRVCQVTGKRPAVGNNRSHAKNAT) is disordered.

The protein belongs to the bacterial ribosomal protein bL28 family.

This Aliivibrio salmonicida (strain LFI1238) (Vibrio salmonicida (strain LFI1238)) protein is Large ribosomal subunit protein bL28.